Here is a 1369-residue protein sequence, read N- to C-terminus: DNA-directed RNA polymerase subunit beta (1369 aa).

This sequence belongs to the RNA polymerase beta chain family. The RNAP catalytic core consists of 2 alpha, 1 beta, 1 beta' and 1 omega subunit. When a sigma factor is associated with the core the holoenzyme is formed, which can initiate transcription.

It carries out the reaction RNA(n) + a ribonucleoside 5'-triphosphate = RNA(n+1) + diphosphate. In terms of biological role, DNA-dependent RNA polymerase catalyzes the transcription of DNA into RNA using the four ribonucleoside triphosphates as substrates. The sequence is that of DNA-directed RNA polymerase subunit beta from Solidesulfovibrio magneticus (strain ATCC 700980 / DSM 13731 / RS-1) (Desulfovibrio magneticus).